Reading from the N-terminus, the 351-residue chain is Transaldolase (351 aa).

K138 acts as the Schiff-base intermediate with substrate in catalysis.

It belongs to the transaldolase family. Type 2 subfamily.

The protein resides in the cytoplasm. The enzyme catalyses D-sedoheptulose 7-phosphate + D-glyceraldehyde 3-phosphate = D-erythrose 4-phosphate + beta-D-fructose 6-phosphate. It participates in carbohydrate degradation; pentose phosphate pathway; D-glyceraldehyde 3-phosphate and beta-D-fructose 6-phosphate from D-ribose 5-phosphate and D-xylulose 5-phosphate (non-oxidative stage): step 2/3. Functionally, transaldolase is important for the balance of metabolites in the pentose-phosphate pathway. This Neisseria meningitidis serogroup A / serotype 4A (strain DSM 15465 / Z2491) protein is Transaldolase (tal).